A 313-amino-acid chain; its full sequence is Serine/threonine-protein kinase SZE1 (313 aa).

Residue G2 is the site of N-myristoyl glycine attachment. In terms of domain architecture, Protein kinase spans 43-311 (MELGESLGYI…EVLDNLNAIA (269 aa)). Residues 49–57 (LGYINPKTL) and K71 each bind ATP.

Belongs to the protein kinase superfamily. Ser/Thr protein kinase family. Component of an immune signaling complex made of, at least, SZE1, BKN2/SZE2, ZAR1 and ZED1. Interacts directly with ZED1, ZAR1 and Pseudomonas syringae HOPZ1A at the plasma membrane. In terms of processing, N-terminal myristoylation is critical for plasma membrane localization and implication in defense responses. Autophosphorylated. In terms of tissue distribution, expressed in roots, seedlings, rosette leaves, floral organs, siliques and inflorescence stems.

It localises to the cell membrane. It catalyses the reaction L-seryl-[protein] + ATP = O-phospho-L-seryl-[protein] + ADP + H(+). It carries out the reaction L-threonyl-[protein] + ATP = O-phospho-L-threonyl-[protein] + ADP + H(+). In terms of biological role, together with BKN2/SZE2 and ZED1, required for effector-triggered immunity (e.g. Pseudomonas syringae effector type III HopZ1a) via the activation of ZAR1, thus being essential for resistance against P.syringae pv. tomato DC3000 expressing HopZ1a. This Arabidopsis thaliana (Mouse-ear cress) protein is Serine/threonine-protein kinase SZE1.